The primary structure comprises 340 residues: Uroporphyrinogen decarboxylase (340 aa).

Residues 23 to 27, D72, Y147, T202, and H316 each bind substrate; that span reads RQAGR.

The protein belongs to the uroporphyrinogen decarboxylase family. In terms of assembly, homodimer.

Its subcellular location is the cytoplasm. It carries out the reaction uroporphyrinogen III + 4 H(+) = coproporphyrinogen III + 4 CO2. The protein operates within porphyrin-containing compound metabolism; protoporphyrin-IX biosynthesis; coproporphyrinogen-III from 5-aminolevulinate: step 4/4. Functionally, catalyzes the decarboxylation of four acetate groups of uroporphyrinogen-III to yield coproporphyrinogen-III. This chain is Uroporphyrinogen decarboxylase, found in Geobacter sulfurreducens (strain ATCC 51573 / DSM 12127 / PCA).